Reading from the N-terminus, the 64-residue chain is Potassium channel toxin kappa-KTx 4.1 (64 aa).

Positions 1–26 are cleaved as a signal peptide; the sequence is MKSTLMTASLLILVVLFIIDYASVYA. Positions 27 to 38 are excised as a propeptide; that stretch reads EFIDGEISLERE. Intrachain disulfides connect cysteine 43-cysteine 61 and cysteine 47-cysteine 57.

This sequence belongs to the short scorpion toxin superfamily. Potassium channel inhibitor kappa-KTx family. Kappa-KTx 4 subfamily. As to expression, expressed by the venom gland.

It is found in the secreted. Its function is as follows. Potassium channel inhibitor (Kv). The chain is Potassium channel toxin kappa-KTx 4.1 from Heterometrus petersii (Asian forest scorpion).